A 66-amino-acid chain; its full sequence is Large ribosomal subunit protein uL29 (66 aa).

Belongs to the universal ribosomal protein uL29 family.

The chain is Large ribosomal subunit protein uL29 from Syntrophobacter fumaroxidans (strain DSM 10017 / MPOB).